The following is a 570-amino-acid chain: Putative diflavin flavoprotein A 5 (570 aa).

The tract at residues 38 to 231 is zinc metallo-hydrolase; it reads ERGTTSNSYV…LQVRLYAVGH (194 aa). The 143-residue stretch at 260-402 folds into the Flavodoxin-like domain; the sequence is VALLYASAYG…VGTDFAQTLK (143 aa). Residues 421–570 are flavodoxin-reductase-like; the sequence is VGRIVGSVCV…INHRKTGNHY (150 aa).

It in the N-terminal section; belongs to the zinc metallo-hydrolase group 3 family. In the C-terminal section; belongs to the flavodoxin reductase family. Fe cation serves as cofactor.

In terms of biological role, mediates electron transfer from NADH to oxygen, reducing it to water. This modular protein has 3 redox cofactors, in other organisms the same activity requires 2 or 3 proteins. The protein is Putative diflavin flavoprotein A 5 (dfa5) of Nostoc sp. (strain PCC 7120 / SAG 25.82 / UTEX 2576).